Here is a 378-residue protein sequence, read N- to C-terminus: Outer membrane protein (378 aa).

The first 22 residues, 1-22 (MRLRTALLATTLMAAAPVAANA), serve as a signal peptide directing secretion. The region spanning 258–378 (PPAPTPARTY…QNRRVEIILH (121 aa)) is the OmpA-like domain.

It is found in the cell outer membrane. Its function is as follows. Growth enhancer. This is Outer membrane protein from Gluconacetobacter diazotrophicus (strain ATCC 49037 / DSM 5601 / CCUG 37298 / CIP 103539 / LMG 7603 / PAl5).